Consider the following 544-residue polypeptide: CTP synthase (544 aa).

The amidoligase domain stretch occupies residues 1–266; sequence MTRFVFITGG…DREVLRHFNL (266 aa). Position 13 (serine 13) interacts with CTP. Position 13 (serine 13) interacts with UTP. ATP is bound at residue 14 to 19; the sequence is SLGKGI. Tyrosine 54 provides a ligand contact to L-glutamine. An ATP-binding site is contributed by aspartate 71. 2 residues coordinate Mg(2+): aspartate 71 and glutamate 140. CTP-binding positions include 147–149, 187–192, and lysine 223; these read DIE and KTKPTQ. UTP-binding positions include 187–192 and lysine 223; that span reads KTKPTQ. The Glutamine amidotransferase type-1 domain occupies 292–543; it reads KIAIVGKYIT…VAAAVRQARL (252 aa). Position 354 (glycine 354) interacts with L-glutamine. Cysteine 381 functions as the Nucleophile; for glutamine hydrolysis in the catalytic mechanism. Residues 382–385, glutamate 405, and arginine 471 each bind L-glutamine; that span reads FGMQ. Catalysis depends on residues histidine 516 and glutamate 518.

The protein belongs to the CTP synthase family. As to quaternary structure, homotetramer.

It catalyses the reaction UTP + L-glutamine + ATP + H2O = CTP + L-glutamate + ADP + phosphate + 2 H(+). The enzyme catalyses L-glutamine + H2O = L-glutamate + NH4(+). It carries out the reaction UTP + NH4(+) + ATP = CTP + ADP + phosphate + 2 H(+). It functions in the pathway pyrimidine metabolism; CTP biosynthesis via de novo pathway; CTP from UDP: step 2/2. Allosterically activated by GTP, when glutamine is the substrate; GTP has no effect on the reaction when ammonia is the substrate. The allosteric effector GTP functions by stabilizing the protein conformation that binds the tetrahedral intermediate(s) formed during glutamine hydrolysis. Inhibited by the product CTP, via allosteric rather than competitive inhibition. In terms of biological role, catalyzes the ATP-dependent amination of UTP to CTP with either L-glutamine or ammonia as the source of nitrogen. Regulates intracellular CTP levels through interactions with the four ribonucleotide triphosphates. This is CTP synthase from Granulibacter bethesdensis (strain ATCC BAA-1260 / CGDNIH1).